We begin with the raw amino-acid sequence, 299 residues long: Small ribosomal subunit biogenesis GTPase RsgA (299 aa).

Residues 73–232 (CSWLTRPQVA…VADTPGFNRP (160 aa)) enclose the CP-type G domain. GTP contacts are provided by residues 122–125 (TKGD) and 174–182 (GPSGVGKSS). Cysteine 257, cysteine 262, histidine 264, and cysteine 270 together coordinate Zn(2+).

It belongs to the TRAFAC class YlqF/YawG GTPase family. RsgA subfamily. As to quaternary structure, monomer. Associates with 30S ribosomal subunit, binds 16S rRNA. Requires Zn(2+) as cofactor.

The protein resides in the cytoplasm. One of several proteins that assist in the late maturation steps of the functional core of the 30S ribosomal subunit. Helps release RbfA from mature subunits. May play a role in the assembly of ribosomal proteins into the subunit. Circularly permuted GTPase that catalyzes slow GTP hydrolysis, GTPase activity is stimulated by the 30S ribosomal subunit. This chain is Small ribosomal subunit biogenesis GTPase RsgA, found in Parasynechococcus marenigrum (strain WH8102).